Reading from the N-terminus, the 203-residue chain is Thymidylate kinase (203 aa).

Residue 10–17 (GIDGAGKS) coordinates ATP.

This sequence belongs to the thymidylate kinase family.

It carries out the reaction dTMP + ATP = dTDP + ADP. Phosphorylation of dTMP to form dTDP in both de novo and salvage pathways of dTTP synthesis. The chain is Thymidylate kinase from Cupriavidus necator (strain ATCC 17699 / DSM 428 / KCTC 22496 / NCIMB 10442 / H16 / Stanier 337) (Ralstonia eutropha).